Reading from the N-terminus, the 260-residue chain is 5'-nucleotidase SurE (260 aa).

Positions 8, 9, 43, and 96 each coordinate a divalent metal cation.

This sequence belongs to the SurE nucleotidase family. The cofactor is a divalent metal cation.

The protein localises to the cytoplasm. The catalysed reaction is a ribonucleoside 5'-phosphate + H2O = a ribonucleoside + phosphate. In terms of biological role, nucleotidase that shows phosphatase activity on nucleoside 5'-monophosphates. This is 5'-nucleotidase SurE from Ruegeria pomeroyi (strain ATCC 700808 / DSM 15171 / DSS-3) (Silicibacter pomeroyi).